The following is a 1025-amino-acid chain: Multidrug resistance protein MdtC (1025 aa).

Over Met1–Leu6 the chain is Cytoplasmic. Residues Phe7–Phe29 traverse the membrane as a helical segment. Topologically, residues Arg30–Glu335 are periplasmic. The helical transmembrane segment at Gln336–Leu353 threads the bilayer. Residues Arg354–Thr359 lie on the Cytoplasmic side of the membrane. Residues Ile360–Leu379 traverse the membrane as a helical segment. Over Cys380 to Ser388 the chain is Periplasmic. The helical transmembrane segment at Leu389–Ala411 threads the bilayer. Residues Arg412 to Glu430 are Cytoplasmic-facing. A helical transmembrane segment spans residues Val431–Gly453. Residues Gly454–Leu467 lie on the Periplasmic side of the membrane. The helical transmembrane segment at Ser468–Leu490 threads the bilayer. Topologically, residues Lys491–Gln852 are cytoplasmic. A helical transmembrane segment spans residues Val853 to Val875. Over His876–Ala894 the chain is Periplasmic. The chain crosses the membrane as a helical span at residues Leu895–Val917. Topologically, residues Lys918–Cys947 are cytoplasmic. The helical transmembrane segment at Leu948–Leu970 threads the bilayer. Topologically, residues Ser971 to Ile984 are periplasmic. The helical transmembrane segment at Thr985 to Phe1007 threads the bilayer. Topologically, residues Phe1008–Glu1025 are cytoplasmic.

This sequence belongs to the resistance-nodulation-cell division (RND) (TC 2.A.6) family. MdtC subfamily. Part of a tripartite efflux system composed of MdtA, MdtB and MdtC. MdtC forms a heteromultimer with MdtB.

It localises to the cell inner membrane. In terms of biological role, the MdtABC tripartite complex confers resistance against novobiocin and deoxycholate. This Escherichia coli O6:H1 (strain CFT073 / ATCC 700928 / UPEC) protein is Multidrug resistance protein MdtC.